The chain runs to 784 residues: 5-methyltetrahydropteroyltriglutamate--homocysteine methyltransferase (784 aa).

5-methyltetrahydropteroyltri-L-glutamate is bound by residues 16–19 (RELK) and Lys112. L-homocysteine-binding positions include 460–462 (IGS) and Glu513. L-methionine contacts are provided by residues 460 to 462 (IGS) and Glu513. Trp590 provides a ligand contact to 5-methyltetrahydropteroyltri-L-glutamate. Asp628 is a binding site for L-homocysteine. Asp628 serves as a coordination point for L-methionine. Glu634 serves as a coordination point for 5-methyltetrahydropteroyltri-L-glutamate. 3 residues coordinate Zn(2+): His670, Cys672, and Glu694. His723 acts as the Proton donor in catalysis. Cys755 is a binding site for Zn(2+).

The protein belongs to the vitamin-B12 independent methionine synthase family. Requires Zn(2+) as cofactor.

It catalyses the reaction 5-methyltetrahydropteroyltri-L-glutamate + L-homocysteine = tetrahydropteroyltri-L-glutamate + L-methionine. The protein operates within amino-acid biosynthesis; L-methionine biosynthesis via de novo pathway; L-methionine from L-homocysteine (MetE route): step 1/1. Its function is as follows. Catalyzes the transfer of a methyl group from 5-methyltetrahydrofolate to homocysteine resulting in methionine formation. The chain is 5-methyltetrahydropteroyltriglutamate--homocysteine methyltransferase from Acidithiobacillus ferrooxidans (strain ATCC 23270 / DSM 14882 / CIP 104768 / NCIMB 8455) (Ferrobacillus ferrooxidans (strain ATCC 23270)).